The following is a 183-amino-acid chain: MESSLTFLLLPVGFPGEVLVTLARRAREAMPVPSLWLASTDPLEPPIEAYSWERMQFDAEKVNEHIHSVLYDYVREGIRIIGVVDADGYIPGFNFVFGLASTALGVATVYTRRLKTGGNGLYTERLLKEVLHEAGHLLGLDHCSNRECVMSFSRSVEEVDRKAPLFCSSCKAKLVLKYGSRGQ.

H132 lines the Zn(2+) pocket. The Proton acceptor role is filled by E133. Zn(2+) is bound by residues H136, H142, C143, C148, C167, and C170.

It belongs to the peptidase M54 family. As to quaternary structure, monomer. The cofactor is Zn(2+).

Its function is as follows. Probable zinc metalloprotease whose natural substrate is unknown. The polypeptide is Archaemetzincin (Aeropyrum pernix (strain ATCC 700893 / DSM 11879 / JCM 9820 / NBRC 100138 / K1)).